A 356-amino-acid polypeptide reads, in one-letter code: MNGVSEGTRGCSDRQPGVLTRDRSCSRKMNSSGCLSEEVGSLRPLTVVILSASIVVGVLGNGLVLWMTVFRMARTVSTVCFFHLALADFMLSLSLPIAMYYIVSRQWLLGEWACKLYITFVFLSYFASNCLLVFISVDRCISVLYPVWALNHRTVQRASWLAFGVWLLAAALCSAHLKFRTTRKWNGCTHCYLAFNSDNETAQIWIEGVVEGHIIGTIGHFLLGFLGPLAIIGTCAHLIRAKLLREGWVHANRPKRLLLVLVSAFFIFWSPFNVVLLVHLWRRVMLKEIYHPRMLLILQASFALGCVNSSLNPFLYVFVGRDFQEKFFQSLTSALARAFGEEEFLSSCPRGNAPRE.

Over 1–44 (MNGVSEGTRGCSDRQPGVLTRDRSCSRKMNSSGCLSEEVGSLRP) the chain is Extracellular. N-linked (GlcNAc...) asparagine glycosylation is present at N30. The chain crosses the membrane as a helical span at residues 45–67 (LTVVILSASIVVGVLGNGLVLWM). Residues 68–78 (TVFRMARTVST) are Cytoplasmic-facing. A helical transmembrane segment spans residues 79-100 (VCFFHLALADFMLSLSLPIAMY). Residues 101–116 (YIVSRQWLLGEWACKL) lie on the Extracellular side of the membrane. Residues C114 and C191 are joined by a disulfide bond. A helical membrane pass occupies residues 117–137 (YITFVFLSYFASNCLLVFISV). The Cytoplasmic portion of the chain corresponds to 138–156 (DRCISVLYPVWALNHRTVQ). Residues 157 to 178 (RASWLAFGVWLLAAALCSAHLK) form a helical membrane-spanning segment. At 179-220 (FRTTRKWNGCTHCYLAFNSDNETAQIWIEGVVEGHIIGTIGH) the chain is on the extracellular side. An N-linked (GlcNAc...) asparagine glycan is attached at N199. The chain crosses the membrane as a helical span at residues 221–241 (FLLGFLGPLAIIGTCAHLIRA). The Cytoplasmic segment spans residues 242 to 257 (KLLREGWVHANRPKRL). The helical transmembrane segment at 258-280 (LLVLVSAFFIFWSPFNVVLLVHL) threads the bilayer. At 281–300 (WRRVMLKEIYHPRMLLILQA) the chain is on the extracellular side. The helical transmembrane segment at 301-320 (SFALGCVNSSLNPFLYVFVG) threads the bilayer. Residues 321–356 (RDFQEKFFQSLTSALARAFGEEEFLSSCPRGNAPRE) lie on the Cytoplasmic side of the membrane.

This sequence belongs to the G-protein coupled receptor 1 family. As to expression, expressed in resting primary human macrophages.

It localises to the cell membrane. Its function is as follows. G-protein coupled receptor that binds to several ligands including resolvin D1 (RvD1) with high affinity, leading to rapid and transient activation of numerous intracellular signaling pathways. In macrophages, enhances the RvD1-stimulated phagocytic and clearance functions. Macrophages migrate less toward different chemoattractant stimuli but phagocytose more microbial particles. Prevents the increase in Ca(2+) and activation of ERK1/2 used by histamine and its H1 receptor subtype to induce goblet cell secretion by activating PKC and GRK2 to counter-regulate the histamine receptor. This chain is Probable G-protein coupled receptor 32 (GPR32), found in Homo sapiens (Human).